The primary structure comprises 548 residues: Membrane protein insertase YidC (548 aa).

Residues 6-26 (NLLIIALLFVSFMIWQAWEQD) form a helical membrane-spanning segment. Residues 28-52 (NPQPQQQTTQTTTTAAGSAADQGVP) are disordered. The span at 29–41 (PQPQQQTTQTTTT) shows a compositional bias: low complexity. The next 4 membrane-spanning stretches (helical) occupy residues 345–365 (KFIH…TFIV), 420–440 (LGGC…YYML), 458–478 (LSAQ…MFFI), and 499–519 (PVIF…YYIV).

The protein belongs to the OXA1/ALB3/YidC family. Type 1 subfamily. As to quaternary structure, interacts with the Sec translocase complex via SecD. Specifically interacts with transmembrane segments of nascent integral membrane proteins during membrane integration.

It localises to the cell inner membrane. Functionally, required for the insertion and/or proper folding and/or complex formation of integral membrane proteins into the membrane. Involved in integration of membrane proteins that insert both dependently and independently of the Sec translocase complex, as well as at least some lipoproteins. Aids folding of multispanning membrane proteins. The chain is Membrane protein insertase YidC from Klebsiella pneumoniae subsp. pneumoniae (strain ATCC 700721 / MGH 78578).